We begin with the raw amino-acid sequence, 616 residues long: Dihydroxy-acid dehydratase (616 aa).

D81 provides a ligand contact to Mg(2+). Position 122 (C122) interacts with [2Fe-2S] cluster. Mg(2+)-binding residues include D123 and K124. Residue K124 is modified to N6-carboxylysine. [2Fe-2S] cluster is bound at residue C195. Residue E491 coordinates Mg(2+). The active-site Proton acceptor is S517.

The protein belongs to the IlvD/Edd family. Homodimer. It depends on [2Fe-2S] cluster as a cofactor. The cofactor is Mg(2+).

It catalyses the reaction (2R)-2,3-dihydroxy-3-methylbutanoate = 3-methyl-2-oxobutanoate + H2O. The enzyme catalyses (2R,3R)-2,3-dihydroxy-3-methylpentanoate = (S)-3-methyl-2-oxopentanoate + H2O. The protein operates within amino-acid biosynthesis; L-isoleucine biosynthesis; L-isoleucine from 2-oxobutanoate: step 3/4. Its pathway is amino-acid biosynthesis; L-valine biosynthesis; L-valine from pyruvate: step 3/4. In terms of biological role, functions in the biosynthesis of branched-chain amino acids. Catalyzes the dehydration of (2R,3R)-2,3-dihydroxy-3-methylpentanoate (2,3-dihydroxy-3-methylvalerate) into 2-oxo-3-methylpentanoate (2-oxo-3-methylvalerate) and of (2R)-2,3-dihydroxy-3-methylbutanoate (2,3-dihydroxyisovalerate) into 2-oxo-3-methylbutanoate (2-oxoisovalerate), the penultimate precursor to L-isoleucine and L-valine, respectively. In Erwinia tasmaniensis (strain DSM 17950 / CFBP 7177 / CIP 109463 / NCPPB 4357 / Et1/99), this protein is Dihydroxy-acid dehydratase.